A 682-amino-acid chain; its full sequence is uncharacterized protein (682 aa).

This is an uncharacterized protein from Saccharomyces cerevisiae (strain ATCC 204508 / S288c) (Baker's yeast).